We begin with the raw amino-acid sequence, 425 residues long: 2-methylserine hydroxymethyltransferase (425 aa).

Residues leucine 126 and 130 to 132 (GHL) contribute to the (6S)-5,6,7,8-tetrahydrofolate site. At lysine 235 the chain carries N6-(pyridoxal phosphate)lysine. Glutamate 251 is a (6S)-5,6,7,8-tetrahydrofolate binding site.

This sequence belongs to the SHMT family. As to quaternary structure, homodimer. Requires pyridoxal 5'-phosphate as cofactor.

It localises to the cytoplasm. It catalyses the reaction (6R)-5,10-methylene-5,6,7,8-tetrahydrofolate + D-alanine + H2O = 2-methylserine + (6S)-5,6,7,8-tetrahydrofolate. It functions in the pathway one-carbon metabolism; tetrahydrofolate interconversion. Its activity is regulated as follows. Inhibited by hydroxylamine and sodium borohydride. In terms of biological role, catalyzes the reversible interconversion of alpha-methyl-L-serine to D-alanine with tetrahydrofolate (THF) serving as the one-carbon carrier. Cannot use alpha-methyl-D-serine, L-serine, D-serine or L-alanine. This chain is 2-methylserine hydroxymethyltransferase, found in Paracoccus sp.